Consider the following 536-residue polypeptide: SNW domain-containing protein 1 (536 aa).

Residues 1–44 are disordered; that stretch reads MALTSFLPAPTQLSQDQLEAEERARSQRSLQTSLVSSRREPPPY. Ala2 bears the N-acetylalanine mark. The residue at position 14 (Ser14) is a Phosphoserine. Residues 27–36 are compositionally biased toward polar residues; that stretch reads QRSLQTSLVS. An interaction with PPIL1 region spans residues 59–79; it reads GDGGAFPEIHVAQYPLDMGRK. Residues Lys81, Lys97, Lys115, Lys122, Lys141, Lys158, and Lys170 each participate in a glycyl lysine isopeptide (Lys-Gly) (interchain with G-Cter in SUMO2) cross-link. Residues 174–339 are SNW; that stretch reads AQYIRYTPSQ…KARERRAGIK (166 aa). Ser182 and Ser190 each carry phosphoserine. Lys193 participates in a covalent cross-link: Glycyl lysine isopeptide (Lys-Gly) (interchain with G-Cter in SUMO2). A disordered region spans residues 212 to 233; sequence FKINKKIPRGPPSPPAPVMHSP. Ser224, Ser232, and Ser234 each carry phosphoserine. Residues Lys240, Lys258, Lys286, Lys339, Lys344, Lys416, and Lys441 each participate in a glycyl lysine isopeptide (Lys-Gly) (interchain with G-Cter in SUMO2) cross-link. The tract at residues 311–386 is disordered; the sequence is KMAQKEKEKH…RSKLQRNENR (76 aa). Position 446 is a phosphoserine (Ser446). Residue Lys452 forms a Glycyl lysine isopeptide (Lys-Gly) (interchain with G-Cter in SUMO2) linkage. Composition is skewed to basic and acidic residues over residues 467–489 and 503–530; these read IKTNRFVPDKEFSGSDRKQRGRE and KFLEEAKQHGGSKRPSDSSRPKEHEHEG. The tract at residues 467–536 is disordered; it reads IKTNRFVPDK…EHEGKKRRKE (70 aa). Phosphoserine occurs at positions 479 and 481. Residue Lys509 forms a Glycyl lysine isopeptide (Lys-Gly) (interchain with G-Cter in SUMO2) linkage.

This sequence belongs to the SNW family. In terms of assembly, identified in the spliceosome C complex. Associates with U4/U6-U5 tri-small nuclear ribonucleoproteins (U4/U6-U5 tri-snRNPs). Component of the minor spliceosome, which splices U12-type introns. Interacts with SKI, SMAD2,SMAD3, RBPJ, RB1, PABPN1, MAGEA1, SIRT1, FOXN3, U2AF2, PPIL1, DAXX and ATP1B4. Interacts with VDR and RXRA; preferentially associates with VDR:RXRA heterodimers. Interacts with NCOR2. Interacts with MAML1. Interacts with NOTCH1 NICD; the interaction involves multimerized NOTCH1 NICD. Forms a complex with NOTCH1 NICD and MAML1; the association is dissociated by RBPJ. Associates with positive transcription elongation factor b (P-TEFb). Component of the SNARP complex which consists at least of SNIP1, SNW1, THRAP3, BCLAF1 and PNN.

Its subcellular location is the nucleus. In terms of biological role, involved in pre-mRNA splicing as component of the spliceosome. As a component of the minor spliceosome, involved in the splicing of U12-type introns in pre-mRNAs. Required in the specific splicing of CDKN1A pre-mRNA; the function probably involves the recruitment of U2AF2 to the mRNA. May recruit PPIL1 to the spliceosome. May be involved in cyclin-D1/CCND1 mRNA stability through the SNARP complex which associates with both the 3'end of the CCND1 gene and its mRNA. Involved in transcriptional regulation. Modulates TGF-beta-mediated transcription via association with SMAD proteins, MYOD1-mediated transcription via association with PABPN1, RB1-mediated transcriptional repression, and retinoid-X receptor (RXR)- and vitamin D receptor (VDR)-dependent gene transcription in a cell line-specific manner probably involving coactivators NCOA1 and GRIP1. Is involved in NOTCH1-mediated transcriptional activation. Binds to multimerized forms of Notch intracellular domain (NICD) and is proposed to recruit transcriptional coactivators such as MAML1 to form an intermediate preactivation complex which associates with DNA-bound CBF-1/RBPJ to form a transcriptional activation complex by releasing SNW1 and redundant NOTCH1 NICD. The chain is SNW domain-containing protein 1 (Snw1) from Mus musculus (Mouse).